The sequence spans 181 residues: 28 kDa heat- and acid-stable phosphoprotein (181 aa).

Residues M1 to A14 show a composition bias toward basic residues. Residues M1 to K117 form a disordered region. Position 18 is a phosphothreonine (T18). A Phosphoserine modification is found at S19. Basic and acidic residues predominate over residues E30–D59. Residue K52 forms a Glycyl lysine isopeptide (Lys-Gly) (interchain with G-Cter in SUMO2) linkage. 3 positions are modified to phosphoserine: S57, S60, and S63. Acidic residues predominate over residues S60–D69. A Phosphotyrosine modification is found at Y70. Positions D102–K117 are enriched in basic and acidic residues. K126 is subject to N6-methyllysine. K132 and K164 each carry N6-acetyllysine. Residues E151–A167 are compositionally biased toward basic and acidic residues. The interval E151–K181 is disordered. S176 and S178 each carry phosphoserine.

This sequence belongs to the PDAP1 family.

Functionally, enhances PDGFA-stimulated cell growth in fibroblasts, but inhibits the mitogenic effect of PDGFB. The polypeptide is 28 kDa heat- and acid-stable phosphoprotein (PDAP1) (Homo sapiens (Human)).